The sequence spans 200 residues: HTH-type transcriptional regulator BetI (200 aa).

One can recognise an HTH tetR-type domain in the interval 8–68 (DIRKPQLVQA…ETMREILRQL (61 aa)). Positions 31-50 (SIALISKEAGVSTGIINHYF) form a DNA-binding region, H-T-H motif.

It functions in the pathway amine and polyamine biosynthesis; betaine biosynthesis via choline pathway [regulation]. Repressor involved in the biosynthesis of the osmoprotectant glycine betaine. It represses transcription of the choline transporter BetT and the genes of BetAB involved in the synthesis of glycine betaine. The chain is HTH-type transcriptional regulator BetI from Vibrio atlanticus (strain LGP32) (Vibrio splendidus (strain Mel32)).